The chain runs to 961 residues: Alanine--tRNA ligase, chloroplastic/mitochondrial (961 aa).

Zn(2+) contacts are provided by histidine 641, histidine 645, cysteine 743, and histidine 747.

Belongs to the class-II aminoacyl-tRNA synthetase family. In terms of assembly, monomer. The cofactor is Zn(2+).

Its subcellular location is the plastid. The protein resides in the chloroplast. It is found in the mitochondrion. It carries out the reaction tRNA(Ala) + L-alanine + ATP = L-alanyl-tRNA(Ala) + AMP + diphosphate. In terms of biological role, catalyzes the attachment of alanine to tRNA(Ala) in a two-step reaction: alanine is first activated by ATP to form Ala-AMP and then transferred to the acceptor end of tRNA(Ala). Also edits incorrectly charged tRNA(Ala) via its editing domain. The chain is Alanine--tRNA ligase, chloroplastic/mitochondrial from Sorghum bicolor (Sorghum).